Reading from the N-terminus, the 337-residue chain is Phosphoenolpyruvate transferase (337 aa).

D69 provides a ligand contact to 7,8-didemethyl-8-hydroxy-5-deazariboflavin.

The protein belongs to the CofD family. Homodimer. Mg(2+) serves as cofactor.

It catalyses the reaction enolpyruvoyl-2-diphospho-5'-guanosine + 7,8-didemethyl-8-hydroxy-5-deazariboflavin = dehydro coenzyme F420-0 + GMP + H(+). It participates in cofactor biosynthesis; coenzyme F420 biosynthesis. Functionally, catalyzes the transfer of the phosphoenolpyruvate moiety from enoylpyruvoyl-2-diphospho-5'-guanosine (EPPG) to 7,8-didemethyl-8-hydroxy-5-deazariboflavin (FO) with the formation of dehydro coenzyme F420-0 and GMP. The protein is Phosphoenolpyruvate transferase of Mycobacterium avium (strain 104).